The chain runs to 159 residues: Transcription elongation factor A protein-like 1 (159 aa).

The tract at residues 1 to 97 (MDKPRKENEE…PPCGVGKHKL (97 aa)) is disordered. A compositionally biased stretch (basic and acidic residues) spans 17 to 34 (KTDEERPPVEHSPEKQSP). Ser28, Ser33, Ser38, Ser39, Ser43, and Ser44 each carry phosphoserine. Positions 37–54 (QSSEEQSSEEEFFPEELL) are enriched in acidic residues. The segment covering 64-80 (SEERPPQEGLSRKDLFE) has biased composition (basic and acidic residues).

The protein belongs to the TFS-II family. TFA subfamily. Post-translationally, phosphorylation of Ser-38 and Ser-39 is critical for transcriptional repression. As to expression, expressed in all tissues examined. Highly expressed in heart, ovary, prostate and skeletal muscle. Moderately expressed in brain, placenta, testis and small intestine. Weakly expressed in lung, liver and spleen. Expressed in several cancer cell lines.

It is found in the nucleus. In terms of biological role, may be involved in transcriptional regulation. Modulates various viral and cellular promoters in a promoter context-dependent manner. For example, transcription from the FOS promoter is increased, while Rous sarcoma virus (RSV) long terminal repeat (LTR) promoter activity is repressed. Does not bind DNA directly. This chain is Transcription elongation factor A protein-like 1, found in Homo sapiens (Human).